The chain runs to 165 residues: Phosphopantetheine adenylyltransferase (165 aa).

S10 serves as a coordination point for substrate. ATP-binding positions include 10-11 (SF) and H18. Substrate contacts are provided by K42, L74, and R88. ATP contacts are provided by residues 89–91 (GLR), E99, and 124–130 (WFYTSST).

The protein belongs to the bacterial CoaD family. As to quaternary structure, homohexamer. Mg(2+) is required as a cofactor.

The protein localises to the cytoplasm. It carries out the reaction (R)-4'-phosphopantetheine + ATP + H(+) = 3'-dephospho-CoA + diphosphate. It functions in the pathway cofactor biosynthesis; coenzyme A biosynthesis; CoA from (R)-pantothenate: step 4/5. Reversibly transfers an adenylyl group from ATP to 4'-phosphopantetheine, yielding dephospho-CoA (dPCoA) and pyrophosphate. In Syntrophus aciditrophicus (strain SB), this protein is Phosphopantetheine adenylyltransferase.